We begin with the raw amino-acid sequence, 585 residues long: Zinc finger protein 614 (585 aa).

The KRAB domain occupies 8–79; it reads LTLEDVAVEF…DAKIQNKNCP (72 aa). Residues 205-227 form a C2H2-type 1; atypical zinc finger; sequence HACIECEQTFLRKSQLIYHENIC. The C2H2-type 2; degenerate zinc finger occupies 257-281; that stretch reads KICIPNEYRKGSTVKSSLITHQQTH. C2H2-type zinc fingers lie at residues 287-309, 315-337, 343-365, 371-393, 399-421, 427-449, 455-477, 483-505, 511-533, and 539-561; these read YMCSECGKGFTMKRYLIAHQRTH, YVCKECGKGFTVKSNLIVHQRTH, YICSECGKGFTMKRYLVVHQRTH, YMCSECGKGFTVKSNLIVHQRSH, YICSECGKGFTVKRTLVIHQRTH, YICNECGKGFTTKRTLIIHQRTH, YECNECGKAFSQKICLIQHERCH, FVCTECGKSYSHKYGLITHQRIH, YECNECGKAFTTKSVLNVHQRTH, and YGCSDCEKAFSHLSNLVKHKKMH.

This sequence belongs to the krueppel C2H2-type zinc-finger protein family.

The protein localises to the nucleus. Functionally, may be involved in transcriptional regulation. This is Zinc finger protein 614 (ZNF614) from Homo sapiens (Human).